The following is a 248-amino-acid chain: Ubiquinone biosynthesis O-methyltransferase (248 aa).

4 residues coordinate S-adenosyl-L-methionine: Arg-41, Gly-72, Asp-93, and Met-136.

The protein belongs to the methyltransferase superfamily. UbiG/COQ3 family.

The enzyme catalyses a 3-demethylubiquinol + S-adenosyl-L-methionine = a ubiquinol + S-adenosyl-L-homocysteine + H(+). It catalyses the reaction a 3-(all-trans-polyprenyl)benzene-1,2-diol + S-adenosyl-L-methionine = a 2-methoxy-6-(all-trans-polyprenyl)phenol + S-adenosyl-L-homocysteine + H(+). The protein operates within cofactor biosynthesis; ubiquinone biosynthesis. Functionally, O-methyltransferase that catalyzes the 2 O-methylation steps in the ubiquinone biosynthetic pathway. The protein is Ubiquinone biosynthesis O-methyltransferase of Brucella melitensis biotype 2 (strain ATCC 23457).